A 173-amino-acid chain; its full sequence is Pathogenesis-related protein 1C (173 aa).

The first 20 residues, 1–20, serve as a signal peptide directing secretion; the sequence is MSTSAVLFLLLAVFAAGASA.

This sequence belongs to the thaumatin family.

The sequence is that of Pathogenesis-related protein 1C from Hordeum vulgare (Barley).